Here is a 461-residue protein sequence, read N- to C-terminus: Photosystem II CP43 reaction center protein (461 aa).

At 1 to 48 the chain is on the cytoplasmic side; that stretch reads MVTLSSNSIFATNRDQESSGFAWWAGNARLINLSGKLLGAHVAHAGLI. A helical membrane pass occupies residues 49 to 71; the sequence is VFWAGAMTLFELAHFIPEKPMYE. The Lumenal portion of the chain corresponds to 72–111; it reads QGLILIPHIATLGWGVGPGGEVVDTFPFFVVGVVHLISSA. A helical transmembrane segment spans residues 112 to 133; it reads VLGFGGVYHAIRGPETLEEYSS. Residues 134 to 155 lie on the Cytoplasmic side of the membrane; that stretch reads FFGYDWKDKNKMTTILGFHLIV. A helical transmembrane segment spans residues 156–178; it reads LGIGALLLVAKAMFFGGLYDTWA. Residues 179-232 are Lumenal-facing; that stretch reads PGGGDVRVITNPTLDPRVIFGYLLKSPFGGEGWIVSVNNLEDVVGGHIWIGLIC. A helical membrane pass occupies residues 233-253; it reads IAGGIWHILTTPFGWARRAFI. Residues 254–268 lie on the Cytoplasmic side of the membrane; that stretch reads WSGEAYLSYSLGALS. The chain crosses the membrane as a helical span at residues 269–289; it reads MMGFIATCFVWFNNTVYPSEF. The Lumenal portion of the chain corresponds to 290–424; that stretch reads YGPTGPEASQ…ATSHFVLAFF (135 aa). [CaMn4O5] cluster is bound at residue Glu-355. A helical membrane pass occupies residues 425-449; the sequence is FLVGHLWHAGRARAAAAGFEKGIDR. At 450–461 the chain is on the cytoplasmic side; it reads ESEPVLSMPSLD.

As to quaternary structure, PSII is composed of 1 copy each of membrane proteins PsbA, PsbB, PsbC, PsbD, PsbE, PsbF, PsbH, PsbI, PsbJ, PsbK, PsbL, PsbM, PsbT, PsbX, PsbY, PsbZ, Psb30/Ycf12, peripheral proteins PsbO, CyanoQ (PsbQ), PsbU, PsbV and a large number of cofactors. It forms dimeric complexes. Part of a photosystem II (PSII) assembly intermediate complex PSII-I; crystallized from a strain deleted of psbJ, it forms monomeric PSII before addition of the oxygen evolving complex. PSII-I includes 3 assembly factors not found in mature PSII (Psb27, Psb28 and Psb34), and CP43 (this protein) is not in its mature conformation. Binds multiple chlorophylls and provides some of the ligands for the Ca-4Mn-5O cluster of the oxygen-evolving complex. It may also provide a ligand for a Cl- that is required for oxygen evolution. PSII binds additional chlorophylls, carotenoids and specific lipids. serves as cofactor.

The protein resides in the cellular thylakoid membrane. Its function is as follows. One of the components of the core complex of photosystem II (PSII). It binds chlorophyll and helps catalyze the primary light-induced photochemical processes of PSII. PSII is a light-driven water:plastoquinone oxidoreductase, using light energy to abstract electrons from H(2)O, generating O(2) and a proton gradient subsequently used for ATP formation. In Thermosynechococcus vestitus (strain NIES-2133 / IAM M-273 / BP-1), this protein is Photosystem II CP43 reaction center protein.